A 200-amino-acid polypeptide reads, in one-letter code: Dephospho-CoA kinase (200 aa).

The DPCK domain maps to 3 to 200 (KVGLTGGIGS…EELQRRLHSR (198 aa)). Residue 11–16 (GSGKSS) coordinates ATP.

The protein belongs to the CoaE family.

The protein localises to the cytoplasm. It catalyses the reaction 3'-dephospho-CoA + ATP = ADP + CoA + H(+). It functions in the pathway cofactor biosynthesis; coenzyme A biosynthesis; CoA from (R)-pantothenate: step 5/5. Catalyzes the phosphorylation of the 3'-hydroxyl group of dephosphocoenzyme A to form coenzyme A. The chain is Dephospho-CoA kinase from Thermobifida fusca (strain YX).